A 264-amino-acid chain; its full sequence is Thymidylate synthase (264 aa).

Residue Arg-21 coordinates dUMP. His-51 contacts (6R)-5,10-methylene-5,6,7,8-tetrahydrofolate. 126 to 127 (RR) serves as a coordination point for dUMP. The active-site Nucleophile is Cys-146. Residues 166-169 (RSCD), Asn-177, and 207-209 (HLY) each bind dUMP. Asp-169 provides a ligand contact to (6R)-5,10-methylene-5,6,7,8-tetrahydrofolate. (6R)-5,10-methylene-5,6,7,8-tetrahydrofolate is bound at residue Ala-263.

It belongs to the thymidylate synthase family. Bacterial-type ThyA subfamily. Homodimer.

Its subcellular location is the cytoplasm. The catalysed reaction is dUMP + (6R)-5,10-methylene-5,6,7,8-tetrahydrofolate = 7,8-dihydrofolate + dTMP. Its pathway is pyrimidine metabolism; dTTP biosynthesis. Its function is as follows. Catalyzes the reductive methylation of 2'-deoxyuridine-5'-monophosphate (dUMP) to 2'-deoxythymidine-5'-monophosphate (dTMP) while utilizing 5,10-methylenetetrahydrofolate (mTHF) as the methyl donor and reductant in the reaction, yielding dihydrofolate (DHF) as a by-product. This enzymatic reaction provides an intracellular de novo source of dTMP, an essential precursor for DNA biosynthesis. This Klebsiella pneumoniae subsp. pneumoniae (strain ATCC 700721 / MGH 78578) protein is Thymidylate synthase.